The chain runs to 707 residues: Polyribonucleotide nucleotidyltransferase (707 aa).

The Mg(2+) site is built by Asp486 and Asp492. The KH domain occupies 553–612; that stretch reads PTVTTLRVLPDKIPIIIGPAGKNIKKIIEETKVKIDLDPEGLVKIYATSKEAAEKAVSMI. Residues 622–690 enclose the S1 motif domain; sequence GEVYMGKVTR…DQGRIKVSLK (69 aa).

It belongs to the polyribonucleotide nucleotidyltransferase family. The cofactor is Mg(2+).

It is found in the cytoplasm. The catalysed reaction is RNA(n+1) + phosphate = RNA(n) + a ribonucleoside 5'-diphosphate. Functionally, involved in mRNA degradation. Catalyzes the phosphorolysis of single-stranded polyribonucleotides processively in the 3'- to 5'-direction. This chain is Polyribonucleotide nucleotidyltransferase, found in Sulfurihydrogenibium azorense (strain DSM 15241 / OCM 825 / Az-Fu1).